A 71-amino-acid chain; its full sequence is Phosphatidylinositol N-acetylglucosaminyltransferase subunit Y (71 aa).

Topologically, residues 1 to 3 are cytoplasmic; it reads MFL. The chain crosses the membrane as a helical span at residues 4–26; that stretch reads SLPMLTVLIPLVSLAGLFYSASV. Over 27 to 44 the chain is Lumenal; it reads EDDFPQGCTSTTSLCFYS. Residues 45–65 form a helical membrane-spanning segment; it reads LLLPITIPVYVFFHLWTWMGI. Over 66 to 71 the chain is Cytoplasmic; that stretch reads KLFRHN.

As to quaternary structure, component of the glycosylphosphatidylinositol-N-acetylglucosaminyltransferase (GPI-GnT) complex composed at least by PIGA, PIGC, PIGH, PIGP, PIGQ, PIGY and DPM2. Interacts directly with PIGA; this interaction regulates glycosylphosphatidylinositol-N-acetylglucosaminyltransferase activity. Does not interact with Ras proteins.

The protein resides in the endoplasmic reticulum membrane. Its pathway is glycolipid biosynthesis; glycosylphosphatidylinositol-anchor biosynthesis. Its function is as follows. Part of the glycosylphosphatidylinositol-N-acetylglucosaminyltransferase (GPI-GnT) complex that catalyzes the transfer of N-acetylglucosamine from UDP-N-acetylglucosamine to phosphatidylinositol and participates in the first step of GPI biosynthesis. May act by regulating the catalytic subunit PIGA. This is Phosphatidylinositol N-acetylglucosaminyltransferase subunit Y from Bos taurus (Bovine).